A 311-amino-acid polypeptide reads, in one-letter code: Malate dehydrogenase (311 aa).

NAD(+) is bound by residues 7–13 (GAAGGIG) and aspartate 34. Positions 81 and 87 each coordinate substrate. NAD(+) contacts are provided by residues asparagine 94 and 117–119 (ITN). Residues asparagine 119 and arginine 153 each contribute to the substrate site. Histidine 177 functions as the Proton acceptor in the catalytic mechanism. Methionine 227 provides a ligand contact to NAD(+).

Belongs to the LDH/MDH superfamily. MDH type 1 family. In terms of assembly, homodimer.

It catalyses the reaction (S)-malate + NAD(+) = oxaloacetate + NADH + H(+). Functionally, catalyzes the reversible oxidation of malate to oxaloacetate. The chain is Malate dehydrogenase from Yersinia enterocolitica serotype O:8 / biotype 1B (strain NCTC 13174 / 8081).